Consider the following 498-residue polypeptide: MNQLEQLTPLTQTQFIAGQWLAGKGPSFSSVNPANGEVIWQGLGADAGQVDAAITSARAAFYTWSAMSLTERLVIVEAFAEQLKEHAELFARTIALETGKALWESRTEVGAMTGKIAISIKANAERTGTVENPMPGAKAFIRHKPHGVVAVFGPYNFPGHLPNGHIVPALIAGNTVLFKPSELTPKVAELTMQLWQQAGLPNGVLNLLQGEIATGKALASHKGIDGLFFTGSSNTGHLLHQQYAGQPGKILALEMGGNNPLIITEVANVDAAVHDIIQSAFISSGQRCTCARRLFIPKTANGDAILAKLLTSTAKIALGDPFAETQPFFGAMISDKAAAGMVKAQADIQAAGGVSLIELTQVTPGLGFVTPGIIDVTDASPLADEEHFGPLLKVYRYTDFDAAIDEANNTSFGLSAGLLADSETDYQHFYRRIRAGIVNWNKPITGASSAAPFGGIGASGNHRASAYYAADYCAYPVSSVEAQAVSLPASLSPGLVIE.

An NAD(+)-binding site is contributed by 231–236 (GSSNTG). Residues glutamate 254 and cysteine 288 contribute to the active site.

This sequence belongs to the aldehyde dehydrogenase family. AstD subfamily.

The enzyme catalyses N-succinyl-L-glutamate 5-semialdehyde + NAD(+) + H2O = N-succinyl-L-glutamate + NADH + 2 H(+). The protein operates within amino-acid degradation; L-arginine degradation via AST pathway; L-glutamate and succinate from L-arginine: step 4/5. Catalyzes the NAD-dependent reduction of succinylglutamate semialdehyde into succinylglutamate. This Shewanella denitrificans (strain OS217 / ATCC BAA-1090 / DSM 15013) protein is N-succinylglutamate 5-semialdehyde dehydrogenase 1.